We begin with the raw amino-acid sequence, 562 residues long: Cytochrome c oxidase subunit 1 (562 aa).

The chain crosses the membrane as a helical span at residues 21-41 (TLYFLVLGFLALIVGSLFGPF). Residue histidine 72 participates in Fe(II)-heme a binding. 8 helical membrane-spanning segments follow: residues 74–94 (VLNA…YLPA), 105–125 (LMWL…LPLL), 144–164 (AFYL…YIVL), 187–207 (VVFW…AVLF), 227–247 (LFWW…YAII), 267–287 (LAFL…QFAD), 300–320 (VLTL…AASL), and 345–365 (AFVA…GGIV). Residues histidine 233, tyrosine 237, histidine 282, and histidine 283 each coordinate Cu cation. The 1'-histidyl-3'-tyrosine (His-Tyr) cross-link spans 233–237 (HPIVY). Histidine 384 serves as a coordination point for heme a3. 4 consecutive transmembrane segments (helical) span residues 385–405 (FHLQ…YWLL), 420–440 (LGLA…VGLH), 471–491 (VLAG…LFSV), and 527–547 (IGFW…PTLV). Histidine 386 is a binding site for Fe(II)-heme a.

Belongs to the heme-copper respiratory oxidase family. Heme is required as a cofactor. Cu cation serves as cofactor.

Its subcellular location is the cell membrane. It carries out the reaction 4 Fe(II)-[cytochrome c] + O2 + 8 H(+)(in) = 4 Fe(III)-[cytochrome c] + 2 H2O + 4 H(+)(out). The protein operates within energy metabolism; oxidative phosphorylation. The polypeptide is Cytochrome c oxidase subunit 1 (cbaA) (Thermus thermophilus (strain ATCC 27634 / DSM 579 / HB8)).